A 479-amino-acid polypeptide reads, in one-letter code: UDP-N-acetylmuramoyl-L-alanyl-D-glutamate--2,6-diaminopimelate ligase (479 aa).

Ser21 contacts UDP-N-acetyl-alpha-D-muramoyl-L-alanyl-D-glutamate. 98-104 (GTNGKSS) is an ATP binding site. UDP-N-acetyl-alpha-D-muramoyl-L-alanyl-D-glutamate is bound by residues 144-145 (TT), Ser171, Gln177, and Arg179. Residue Lys211 is modified to N6-carboxylysine. Meso-2,6-diaminopimelate-binding positions include Arg372, 396-399 (DNPR), Gly446, and Glu450. The Meso-diaminopimelate recognition motif motif lies at 396–399 (DNPR).

This sequence belongs to the MurCDEF family. MurE subfamily. Requires Mg(2+) as cofactor. In terms of processing, carboxylation is probably crucial for Mg(2+) binding and, consequently, for the gamma-phosphate positioning of ATP.

Its subcellular location is the cytoplasm. The catalysed reaction is UDP-N-acetyl-alpha-D-muramoyl-L-alanyl-D-glutamate + meso-2,6-diaminopimelate + ATP = UDP-N-acetyl-alpha-D-muramoyl-L-alanyl-gamma-D-glutamyl-meso-2,6-diaminopimelate + ADP + phosphate + H(+). It functions in the pathway cell wall biogenesis; peptidoglycan biosynthesis. Its function is as follows. Catalyzes the addition of meso-diaminopimelic acid to the nucleotide precursor UDP-N-acetylmuramoyl-L-alanyl-D-glutamate (UMAG) in the biosynthesis of bacterial cell-wall peptidoglycan. This is UDP-N-acetylmuramoyl-L-alanyl-D-glutamate--2,6-diaminopimelate ligase from Rickettsia montanensis.